The primary structure comprises 341 residues: Inositol monophosphatase 3 (341 aa).

The chain crosses the membrane as a helical span at residues 11–31 (LGIAVFCLLGVGVIYHLYAGV). Mg(2+) is bound by residues glutamate 117, aspartate 157, leucine 159, aspartate 160, and aspartate 283. Glutamate 117 is a substrate binding site. Residues 159–162 (LDAT) and aspartate 283 contribute to the substrate site.

This sequence belongs to the inositol monophosphatase superfamily. Requires Mg(2+) as cofactor.

It is found in the membrane. It catalyses the reaction a myo-inositol phosphate + H2O = myo-inositol + phosphate. Its pathway is polyol metabolism; myo-inositol biosynthesis; myo-inositol from D-glucose 6-phosphate: step 2/2. The sequence is that of Inositol monophosphatase 3 (bpnt2) from Danio rerio (Zebrafish).